A 117-amino-acid polypeptide reads, in one-letter code: Large ribosomal subunit protein bL20c (117 aa).

The protein belongs to the bacterial ribosomal protein bL20 family.

The protein resides in the plastid. It localises to the chloroplast. Binds directly to 23S ribosomal RNA and is necessary for the in vitro assembly process of the 50S ribosomal subunit. It is not involved in the protein synthesizing functions of that subunit. This chain is Large ribosomal subunit protein bL20c, found in Calycanthus floridus var. glaucus (Eastern sweetshrub).